A 206-amino-acid polypeptide reads, in one-letter code: Twist-related protein 1 (206 aa).

Over residues Met-1–Ser-18 the composition is skewed to low complexity. The segment at Met-1–Glu-109 is disordered. The segment covering Arg-34–Arg-43 has biased composition (basic residues). Gly residues-rich tracts occupy residues Gly-48–Glu-65 and Ser-78–Ser-103. One can recognise a bHLH domain in the interval Thr-112–Leu-163. Residues Gln-165–Arg-195 are sufficient for transactivation activity.

In terms of assembly, efficient DNA binding requires dimerization with another bHLH protein. Homodimer or heterodimer with E proteins such as TCF3. ID1 binds preferentially to TCF3 but does not interact efficiently with TWIST1 so ID1 levels control the amount of TCF3 available to dimerize with TWIST1 and thus determine the type of dimer formed. As to expression, subset of mesodermal cells.

The protein resides in the nucleus. In terms of biological role, acts as a transcriptional regulator. Inhibits myogenesis by sequestrating E proteins, inhibiting trans-activation by MEF2, and inhibiting DNA-binding by MYOD1 through physical interaction. This interaction probably involves the basic domains of both proteins. Also represses expression of pro-inflammatory cytokines such as TNFA and IL1B. Regulates cranial suture patterning and fusion. Activates transcription as a heterodimer with E proteins. Regulates gene expression differentially, depending on dimer composition. Homodimers induce expression of FGFR2 and POSTN while heterodimers repress FGFR2 and POSTN expression and induce THBS1 expression. Heterodimerization is also required for osteoblast differentiation. Represses the activity of the circadian transcriptional activator: NPAS2-BMAL1 heterodimer. This Mus musculus (Mouse) protein is Twist-related protein 1 (Twist1).